The chain runs to 995 residues: Bifunctional glutamine synthetase adenylyltransferase/adenylyl-removing enzyme (995 aa).

The tract at residues Met1 to Asp474 is adenylyl removase. 2 glnE regions span residues Arg122–Gln333 and Ser637–Ala853. Residues Ala479 to Arg995 are adenylyl transferase.

Belongs to the GlnE family. Mg(2+) serves as cofactor.

It carries out the reaction [glutamine synthetase]-O(4)-(5'-adenylyl)-L-tyrosine + phosphate = [glutamine synthetase]-L-tyrosine + ADP. The catalysed reaction is [glutamine synthetase]-L-tyrosine + ATP = [glutamine synthetase]-O(4)-(5'-adenylyl)-L-tyrosine + diphosphate. Involved in the regulation of glutamine synthetase GlnA, a key enzyme in the process to assimilate ammonia. When cellular nitrogen levels are high, the C-terminal adenylyl transferase (AT) inactivates GlnA by covalent transfer of an adenylyl group from ATP to specific tyrosine residue of GlnA, thus reducing its activity. Conversely, when nitrogen levels are low, the N-terminal adenylyl removase (AR) activates GlnA by removing the adenylyl group by phosphorolysis, increasing its activity. The regulatory region of GlnE binds the signal transduction protein PII (GlnB) which indicates the nitrogen status of the cell. The polypeptide is Bifunctional glutamine synthetase adenylyltransferase/adenylyl-removing enzyme (Bradyrhizobium diazoefficiens (strain JCM 10833 / BCRC 13528 / IAM 13628 / NBRC 14792 / USDA 110)).